The chain runs to 156 residues: Small ribosomal subunit protein uS7 (156 aa).

It belongs to the universal ribosomal protein uS7 family. Part of the 30S ribosomal subunit. Contacts proteins S9 and S11.

Its function is as follows. One of the primary rRNA binding proteins, it binds directly to 16S rRNA where it nucleates assembly of the head domain of the 30S subunit. Is located at the subunit interface close to the decoding center, probably blocks exit of the E-site tRNA. In Bacillus licheniformis (strain ATCC 14580 / DSM 13 / JCM 2505 / CCUG 7422 / NBRC 12200 / NCIMB 9375 / NCTC 10341 / NRRL NRS-1264 / Gibson 46), this protein is Small ribosomal subunit protein uS7.